Reading from the N-terminus, the 87-residue chain is U14-lycotoxin-Ls1a (87 aa).

A signal peptide spans 1–20; sequence MNSKVFAALLLLALSTCVLS. Residues 21–66 enclose the WAP domain; that stretch reads EKYCPTPRNTSCKKMNIRNNCCRDSDCTSNAFCCAEPCGNFCHKAS. 5 cysteine pairs are disulfide-bonded: C24–C54, C32–C58, C41–C53, C42–C80, and C47–C62.

The protein belongs to the venom protein 11 family. 01 (wap-1) subfamily. In terms of processing, contains 5 disulfide bonds. In terms of tissue distribution, expressed by the venom gland.

It localises to the secreted. Functionally, has antibacterial activity. In Lycosa singoriensis (Wolf spider), this protein is U14-lycotoxin-Ls1a.